The primary structure comprises 356 residues: Tyrosine recombinase XerS (356 aa).

In terms of domain architecture, Core-binding (CB) spans 16-121 (IMPWYVLDYY…ALSSLYKYLT (106 aa)). Residues 169–354 (AFLDYVDKEY…VNDEQKNALD (186 aa)) form the Tyr recombinase domain. Active-site residues include Arg210, Lys234, His306, Arg309, and His332. Tyr341 serves as the catalytic O-(3'-phospho-DNA)-tyrosine intermediate.

The protein belongs to the 'phage' integrase family. XerS subfamily.

The protein localises to the cytoplasm. FtsK is required for recombination. In terms of biological role, site-specific tyrosine recombinase, which acts by catalyzing the cutting and rejoining of the recombining DNA molecules. Essential to convert dimers of the bacterial chromosome into monomers to permit their segregation at cell division. The chain is Tyrosine recombinase XerS from Streptococcus equi subsp. zooepidemicus (strain H70).